A 487-amino-acid chain; its full sequence is Adenylosuccinate synthetase, chloroplastic (487 aa).

The N-terminal 46 residues, 1–46 (MSLSTVNHAAAAAAAAGSGKSFSAAAPAAPSVRLPRTRAPAAAAVS), are a transit peptide targeting the chloroplast. Residues 74-80 (GDEGKGK) and 102-104 (GHT) each bind GTP. D75 functions as the Proton acceptor in the catalytic mechanism. Mg(2+)-binding residues include D75 and G102. IMP contacts are provided by residues 75-78 (DEGK), 100-103 (NAGH), T192, R206, Q286, T301, and R365. H103 functions as the Proton donor in the catalytic mechanism. 361–367 (TTTGRPR) contributes to the substrate binding site. GTP is bound by residues R367, 393 to 395 (KLD), and 476 to 478 (GVG).

It belongs to the adenylosuccinate synthetase family. In terms of assembly, homodimer. Requires Mg(2+) as cofactor.

The protein localises to the plastid. It is found in the chloroplast. It catalyses the reaction IMP + L-aspartate + GTP = N(6)-(1,2-dicarboxyethyl)-AMP + GDP + phosphate + 2 H(+). It participates in purine metabolism; AMP biosynthesis via de novo pathway; AMP from IMP: step 1/2. Plays an important role in the de novo pathway and in the salvage pathway of purine nucleotide biosynthesis. Catalyzes the first committed step in the biosynthesis of AMP from IMP. The chain is Adenylosuccinate synthetase, chloroplastic from Oryza sativa subsp. indica (Rice).